A 163-amino-acid polypeptide reads, in one-letter code: uncharacterized protein (163 aa).

The protein belongs to the ycf51 family.

Its subcellular location is the plastid. It localises to the cyanelle. This is an uncharacterized protein from Cyanophora paradoxa.